Reading from the N-terminus, the 545-residue chain is Glutamyl-tRNA(Gln) amidotransferase subunit B-1, chloroplastic/mitochondrial (545 aa).

The protein belongs to the GatB/GatE family. GatB subfamily. In terms of assembly, subunit of the heterotrimeric GatCAB amidotransferase (AdT) complex, composed of A, B and C subunits.

Its subcellular location is the mitochondrion. It localises to the plastid. The protein resides in the chloroplast. The enzyme catalyses L-glutamyl-tRNA(Gln) + L-glutamine + ATP + H2O = L-glutaminyl-tRNA(Gln) + L-glutamate + ADP + phosphate + H(+). Functionally, allows the formation of correctly charged Gln-tRNA(Gln) through the transamidation of misacylated Glu-tRNA(Gln) in chloroplasts and mitochondria. The reaction takes place in the presence of glutamine and ATP through an activated gamma-phospho-Glu-tRNA(Gln). This chain is Glutamyl-tRNA(Gln) amidotransferase subunit B-1, chloroplastic/mitochondrial, found in Micromonas pusilla (strain CCMP1545) (Picoplanktonic green alga).